The following is a 102-amino-acid chain: Small ribosomal subunit protein uS10 (102 aa).

This sequence belongs to the universal ribosomal protein uS10 family. In terms of assembly, part of the 30S ribosomal subunit.

Its function is as follows. Involved in the binding of tRNA to the ribosomes. The sequence is that of Small ribosomal subunit protein uS10 (rpsJ) from Bacillus subtilis (strain 168).